A 218-amino-acid polypeptide reads, in one-letter code: Adenylate kinase (218 aa).

Position 10-15 (10-15 (GAGKGT)) interacts with ATP. Residues 30 to 59 (STGDMLRAAVKAQSELGMAAKKVMDEGGLV) are NMP. AMP is bound by residues Thr-31, Arg-36, 57–59 (GLV), 85–88 (GFPR), and Gln-92. The LID stretch occupies residues 122–159 (GRRVHPASGRTYHIVFNPPAVEGKDDVTGEDLVQRDDD). Residues Arg-123 and 132–133 (TY) contribute to the ATP site. The AMP site is built by Arg-156 and Arg-167. Gly-203 is a binding site for ATP.

Belongs to the adenylate kinase family. Monomer.

It is found in the cytoplasm. The catalysed reaction is AMP + ATP = 2 ADP. It functions in the pathway purine metabolism; AMP biosynthesis via salvage pathway; AMP from ADP: step 1/1. Functionally, catalyzes the reversible transfer of the terminal phosphate group between ATP and AMP. Plays an important role in cellular energy homeostasis and in adenine nucleotide metabolism. The polypeptide is Adenylate kinase (Chlorobaculum parvum (strain DSM 263 / NCIMB 8327) (Chlorobium vibrioforme subsp. thiosulfatophilum)).